The following is a 263-amino-acid chain: Glutathione S-transferase F8, chloroplastic (263 aa).

A chloroplast-targeting transit peptide spans 1 to 49 (MGAIQARLPLFLSPPSIKHHTFLHSSSSNSNFKIRSNKSSSSSSSSIIM). Residues 50-131 (ASIKVHGVPM…YLAEEYSEKG (82 aa)) enclose the GST N-terminal domain. Glutathione-binding positions include 60–61 (ST), 89–90 (HK), 102–103 (QI), and 115–116 (ES). In terms of domain architecture, GST C-terminal spans 139 to 263 (CKKVKATTNV…WAKVIDLQKQ (125 aa)). Residue threonine 177 is modified to Phosphothreonine.

The protein belongs to the GST superfamily. Phi family. In terms of tissue distribution, isoform 1 is predominantly expressed in leaves and isoform 2 in roots.

It is found in the plastid. The protein resides in the chloroplast. The protein localises to the cytoplasm. Its subcellular location is the cytosol. It carries out the reaction RX + glutathione = an S-substituted glutathione + a halide anion + H(+). Functionally, in vitro, possesses glutathione S-transferase activity toward 1-chloro-2,4-dinitrobenzene (CDNB) and glutathione peroxidase activity toward cumene hydroperoxide and linoleic acid-13-hydroperoxide. May be involved in the conjugation of reduced glutathione to a wide number of exogenous and endogenous hydrophobic electrophiles and have a detoxification role against certain herbicides. The chain is Glutathione S-transferase F8, chloroplastic (GSTF8) from Arabidopsis thaliana (Mouse-ear cress).